The chain runs to 484 residues: Glutamyl-tRNA(Gln) amidotransferase subunit A (484 aa).

Residues Lys-76 and Ser-151 each act as charge relay system in the active site. The Acyl-ester intermediate role is filled by Ser-175.

Belongs to the amidase family. GatA subfamily. Heterotrimer of A, B and C subunits.

It catalyses the reaction L-glutamyl-tRNA(Gln) + L-glutamine + ATP + H2O = L-glutaminyl-tRNA(Gln) + L-glutamate + ADP + phosphate + H(+). Allows the formation of correctly charged Gln-tRNA(Gln) through the transamidation of misacylated Glu-tRNA(Gln) in organisms which lack glutaminyl-tRNA synthetase. The reaction takes place in the presence of glutamine and ATP through an activated gamma-phospho-Glu-tRNA(Gln). The polypeptide is Glutamyl-tRNA(Gln) amidotransferase subunit A (Saccharophagus degradans (strain 2-40 / ATCC 43961 / DSM 17024)).